Reading from the N-terminus, the 540-residue chain is Glucose-6-phosphate isomerase (540 aa).

Glu-350 acts as the Proton donor in catalysis. Catalysis depends on residues His-381 and Lys-503.

Belongs to the GPI family.

It localises to the cytoplasm. It catalyses the reaction alpha-D-glucose 6-phosphate = beta-D-fructose 6-phosphate. Its pathway is carbohydrate biosynthesis; gluconeogenesis. It functions in the pathway carbohydrate degradation; glycolysis; D-glyceraldehyde 3-phosphate and glycerone phosphate from D-glucose: step 2/4. Catalyzes the reversible isomerization of glucose-6-phosphate to fructose-6-phosphate. The protein is Glucose-6-phosphate isomerase of Burkholderia multivorans (strain ATCC 17616 / 249).